The chain runs to 209 residues: Octanoyltransferase (209 aa).

Positions 30–209 constitute a BPL/LPL catalytic domain; that stretch reads DNEPEIVYLV…IQTEFNKIFK (180 aa). Substrate is bound by residues 69–76, 143–145, and 156–158; these read RGGKFTFH, AIG, and GVA. Cysteine 174 (acyl-thioester intermediate) is an active-site residue.

The protein belongs to the LipB family.

It localises to the cytoplasm. The enzyme catalyses octanoyl-[ACP] + L-lysyl-[protein] = N(6)-octanoyl-L-lysyl-[protein] + holo-[ACP] + H(+). The protein operates within protein modification; protein lipoylation via endogenous pathway; protein N(6)-(lipoyl)lysine from octanoyl-[acyl-carrier-protein]: step 1/2. In terms of biological role, catalyzes the transfer of endogenously produced octanoic acid from octanoyl-acyl-carrier-protein onto the lipoyl domains of lipoate-dependent enzymes. Lipoyl-ACP can also act as a substrate although octanoyl-ACP is likely to be the physiological substrate. The chain is Octanoyltransferase from Rickettsia felis (strain ATCC VR-1525 / URRWXCal2) (Rickettsia azadi).